The chain runs to 88 residues: MANTAQARKRARQAVVQNAHNSALRSRLRTAIKGVRKAVAAGDKTAAAAAFKTAQSTIDSIADKKIVHKNKAARAKSRLSAAIKAMAA.

The interval 1–20 (MANTAQARKRARQAVVQNAH) is disordered.

It belongs to the bacterial ribosomal protein bS20 family.

In terms of biological role, binds directly to 16S ribosomal RNA. In Ralstonia pickettii (strain 12J), this protein is Small ribosomal subunit protein bS20.